The sequence spans 716 residues: Leucine-rich repeat neuronal protein 1 (716 aa).

An N-terminal signal peptide occupies residues 1 to 25 (MARLSTGKAACQVVLGLLITSLTES). The LRRNT domain maps to 26-72 (SILTSECPQLCVCEIRPWFTPQSTYREATTVDCNDLRLTRIPGNLSS). The Extracellular portion of the chain corresponds to 26-631 (SILTSECPQL…DISDHETSTA (606 aa)). Asn-69 carries an N-linked (GlcNAc...) asparagine glycan. LRR repeat units follow at residues 73-95 (DTQV…QQLF), 96-117 (NLTE…GLAN), 120-141 (QLTT…CLQD), 144-165 (NLQE…AFSG), 168-189 (NLLR…WFDS), 192-213 (NLEI…NFRP), 216-237 (NLRS…ALVG), 240-261 (SLES…ALQK), and 264-285 (NLKF…DFKN). N-linked (GlcNAc...) asparagine glycosylation is found at Asn-96 and Asn-117. One can recognise an LRRCT domain in the interval 371–424 (NPLRCDCVIHWINSNKTNIRFMEPLSMFCAMPPEYRGQQVKEVLIQDSSEQCLP). An N-linked (GlcNAc...) asparagine glycan is attached at Asn-385. The 92-residue stretch at 424 to 515 (PMISHDTFPN…GADTRVATIK (92 aa)) folds into the Ig-like C2-type domain. Cys-447 and Cys-499 form a disulfide bridge. Residue Asn-517 is glycosylated (N-linked (GlcNAc...) asparagine). Residues 525-619 (QVLKIYVKQT…VNVTTKTAAF (95 aa)) form the Fibronectin type-III domain. A helical transmembrane segment spans residues 632–652 (LAAVMGSMFAVISLASIAIYI). The Cytoplasmic segment spans residues 653–716 (AKRFKRKNYH…VDTSRSYYMW (64 aa)). Positions 692–716 (SDKDKDGSADTKPTQVDTSRSYYMW) are disordered. The segment covering 702-716 (TKPTQVDTSRSYYMW) has biased composition (polar residues).

As to expression, expressed in brain.

The protein resides in the membrane. This is Leucine-rich repeat neuronal protein 1 (Lrrn1) from Mus musculus (Mouse).